A 95-amino-acid polypeptide reads, in one-letter code: Large ribosomal subunit protein bL28 (95 aa).

A disordered region spans residues 1 to 28; it reads MARKRTLGGKAPQAGNKVSHSQRKTRRQ.

It belongs to the bacterial ribosomal protein bL28 family.

This is Large ribosomal subunit protein bL28 from Magnetococcus marinus (strain ATCC BAA-1437 / JCM 17883 / MC-1).